Consider the following 331-residue polypeptide: Ketol-acid reductoisomerase (NADP(+)) (331 aa).

Positions 2 to 182 constitute a KARI N-terminal Rossmann domain; that stretch reads AQLFYDSDAD…GGTRAGILET (181 aa). NADP(+)-binding positions include 25 to 28, Ser-51, Ser-53, and 83 to 86; these read YGSQ and DEFQ. Residue His-108 is part of the active site. NADP(+) is bound at residue Gly-134. The region spanning 183–328 is the KARI C-terminal knotted domain; the sequence is NFKEETETDL…KGLRSMFSWL (146 aa). Residues Asp-191, Glu-195, Glu-227, and Glu-231 each coordinate Mg(2+). Residue Ser-252 coordinates substrate.

The protein belongs to the ketol-acid reductoisomerase family. It depends on Mg(2+) as a cofactor.

It carries out the reaction (2R)-2,3-dihydroxy-3-methylbutanoate + NADP(+) = (2S)-2-acetolactate + NADPH + H(+). The enzyme catalyses (2R,3R)-2,3-dihydroxy-3-methylpentanoate + NADP(+) = (S)-2-ethyl-2-hydroxy-3-oxobutanoate + NADPH + H(+). It participates in amino-acid biosynthesis; L-isoleucine biosynthesis; L-isoleucine from 2-oxobutanoate: step 2/4. The protein operates within amino-acid biosynthesis; L-valine biosynthesis; L-valine from pyruvate: step 2/4. In terms of biological role, involved in the biosynthesis of branched-chain amino acids (BCAA). Catalyzes an alkyl-migration followed by a ketol-acid reduction of (S)-2-acetolactate (S2AL) to yield (R)-2,3-dihydroxy-isovalerate. In the isomerase reaction, S2AL is rearranged via a Mg-dependent methyl migration to produce 3-hydroxy-3-methyl-2-ketobutyrate (HMKB). In the reductase reaction, this 2-ketoacid undergoes a metal-dependent reduction by NADPH to yield (R)-2,3-dihydroxy-isovalerate. The chain is Ketol-acid reductoisomerase (NADP(+)) from Synechococcus sp. (strain CC9605).